Reading from the N-terminus, the 110-residue chain is DNA-directed RNA polymerase subunit omega (110 aa).

The protein belongs to the RNA polymerase subunit omega family. The RNAP catalytic core consists of 2 alpha, 1 beta, 1 beta' and 1 omega subunit. When a sigma factor is associated with the core the holoenzyme is formed, which can initiate transcription.

The catalysed reaction is RNA(n) + a ribonucleoside 5'-triphosphate = RNA(n+1) + diphosphate. In terms of biological role, promotes RNA polymerase assembly. Latches the N- and C-terminal regions of the beta' subunit thereby facilitating its interaction with the beta and alpha subunits. The chain is DNA-directed RNA polymerase subunit omega from Nocardioides sp. (strain ATCC BAA-499 / JS614).